Consider the following 299-residue polypeptide: Circadian clock oscillator protein KaiA (299 aa).

The segment at 1–135 is psR domain, binds oxidized quinones; that stretch reads MQSPLSLCLF…LHLGPICTLP (135 aa). Positions 1–169 constitute a KaiA N-terminal domain; the sequence is MQSPLSLCLF…RLADKLKERL (169 aa). Residues 170 to 178 are flexible linker; the sequence is GYLGVYYKR. The KaiA C-terminal domain occupies 179–287; sequence KPSHFYRNFS…GEMYRRSIPR (109 aa).

The protein belongs to the KaiA family. Homodimer. The KaiABC1 complex composition changes during the circadian cycle to control KaiC1 phosphorylation. Complexes KaiC1(6), KaiA(2-4):KaiC1(6), KaiB(6):KaiC1(6) and KaiC1(6):KaiB(6):KaiA(12) are among the most important forms, many form cooperatively. KaiA and CikA bind to the same region of the KaiB(fs) form and therefore compete. Interacts with KaiC1 but not KaiC2 or KaiC3. Interacts with itself, not seen to interact with other Kai proteins.

Its function is as follows. Key component of the KaiABC oscillator complex, which constitutes the main circadian regulator in cyanobacteria. Complex composition changes during the circadian cycle to control KaiC phosphorylation. KaiA stimulates KaiC autophosphorylation, while KaiB sequesters KaiA, leading to KaiC autodephosphorylation. KaiA binding to the KaiC CII domain during the subjective day yields KaiA(2-4):KaiC(6) complexes which stimulate KaiC autophosphorylation. Phospho-Ser-431 KaiC accumulation triggers binding of KaiB during the subjective night to form the KaiB(6):KaiC(6) complex, leading to changes in the output regulators CikA and SasA. KaiB(6):KaiC(6) formation exposes a site for KaiA binding on KaiB that sequesters KaiA from KaiC's CII domain, making the KaiC(6):KaiB(6):KaiA(12) complex resulting in KaiC autodephosphorylation. Complete dephosphorylation of KaiC leads to dissociation of KaiA(2):KaiB(1), completing 1 cycle of the Kai oscillator. Component of the oscillator and circadian clock in this organism, enhances fitness in a rhythmic environment. Stimulates KaiC1 to autophosphorylate, has no effect on the kinase activity of KaiC2 or KaiC3. Functionally, binds oxidized quinones via the N-terminal PsR domain, allowing it to sense redox changes and possibly mediate clock input. The sequence is that of Circadian clock oscillator protein KaiA from Synechocystis sp. (strain ATCC 27184 / PCC 6803 / Kazusa).